The following is a 140-amino-acid chain: ATP synthase epsilon chain 1 (140 aa).

It belongs to the ATPase epsilon chain family. As to quaternary structure, F-type ATPases have 2 components, CF(1) - the catalytic core - and CF(0) - the membrane proton channel. CF(1) has five subunits: alpha(3), beta(3), gamma(1), delta(1), epsilon(1). CF(0) has three main subunits: a, b and c.

The protein localises to the cell inner membrane. In terms of biological role, produces ATP from ADP in the presence of a proton gradient across the membrane. In Methylococcus capsulatus (strain ATCC 33009 / NCIMB 11132 / Bath), this protein is ATP synthase epsilon chain 1.